The sequence spans 209 residues: Uracil phosphoribosyltransferase (209 aa).

Residues R79, R104, and 131–139 contribute to the 5-phospho-alpha-D-ribose 1-diphosphate site; that span reads DPMLATGGS. Residues I194 and 199 to 201 contribute to the uracil site; that span reads GDA. Residue D200 coordinates 5-phospho-alpha-D-ribose 1-diphosphate.

The protein belongs to the UPRTase family. Requires Mg(2+) as cofactor.

The catalysed reaction is UMP + diphosphate = 5-phospho-alpha-D-ribose 1-diphosphate + uracil. The protein operates within pyrimidine metabolism; UMP biosynthesis via salvage pathway; UMP from uracil: step 1/1. With respect to regulation, allosterically activated by GTP. Functionally, catalyzes the conversion of uracil and 5-phospho-alpha-D-ribose 1-diphosphate (PRPP) to UMP and diphosphate. The sequence is that of Uracil phosphoribosyltransferase from Shouchella clausii (strain KSM-K16) (Alkalihalobacillus clausii).